Reading from the N-terminus, the 592-residue chain is Polyadenylate-binding protein, cytoplasmic and nuclear (592 aa).

A compositionally biased stretch (basic and acidic residues) spans 1 to 10 (MSDITEKTAE). The disordered stretch occupies residues 1-43 (MSDITEKTAEQLENLQINDDQQPAQSASAPSTSASESEASSVS). Residues 11–20 (QLENLQINDD) show a composition bias toward polar residues. The span at 21–43 (QQPAQSASAPSTSASESEASSVS) shows a compositional bias: low complexity. RRM domains are found at residues 50–128 (ASLY…WSER), 138–215 (GNIF…MHVP), 231–308 (TNIY…RAQK), and 334–411 (VNLF…IAQR). In terms of domain architecture, PABC spans 507 to 586 (NQFPRHQQQH…ALAAYENFKK (80 aa)).

It belongs to the polyadenylate-binding protein type-1 family.

It is found in the cytoplasm. The protein resides in the nucleus. Functionally, binds the poly(A) tail of mRNA. Appears to be an important mediator of the multiple roles of the poly(A) tail in mRNA biogenesis, stability and translation. In the nucleus, involved in both mRNA cleavage and polyadenylation. Is also required for efficient mRNA export to the cytoplasm. Acts in concert with a poly(A)-specific nuclease (PAN) to affect poly(A) tail shortening, which may occur concomitantly with either nucleocytoplasmic mRNA transport or translational initiation. In the cytoplasm, stimulates translation initiation and regulates mRNA decay through translation termination-coupled poly(A) shortening, probably mediated by PAN. This chain is Polyadenylate-binding protein, cytoplasmic and nuclear (PAB1), found in Kluyveromyces lactis (strain ATCC 8585 / CBS 2359 / DSM 70799 / NBRC 1267 / NRRL Y-1140 / WM37) (Yeast).